A 289-amino-acid chain; its full sequence is ATP phosphoribosyltransferase (289 aa).

The protein belongs to the ATP phosphoribosyltransferase family. Long subfamily. Requires Mg(2+) as cofactor.

The protein localises to the cytoplasm. It catalyses the reaction 1-(5-phospho-beta-D-ribosyl)-ATP + diphosphate = 5-phospho-alpha-D-ribose 1-diphosphate + ATP. It functions in the pathway amino-acid biosynthesis; L-histidine biosynthesis; L-histidine from 5-phospho-alpha-D-ribose 1-diphosphate: step 1/9. Feedback inhibited by histidine. Catalyzes the condensation of ATP and 5-phosphoribose 1-diphosphate to form N'-(5'-phosphoribosyl)-ATP (PR-ATP). Has a crucial role in the pathway because the rate of histidine biosynthesis seems to be controlled primarily by regulation of HisG enzymatic activity. In Solibacter usitatus (strain Ellin6076), this protein is ATP phosphoribosyltransferase.